The following is a 342-amino-acid chain: Zinc transporter ZIP11 (342 aa).

7 helical membrane-spanning segments follow: residues Leu12 to Phe32, Leu44 to Val64, Gly72 to Val92, Ile194 to Val214, Phe263 to Val285, Ile290 to Met307, and Leu322 to Gly342.

The protein belongs to the ZIP transporter (TC 2.A.5) family.

It localises to the cell membrane. Its subcellular location is the nucleus. The protein localises to the cytoplasm. The protein resides in the golgi apparatus. It carries out the reaction Zn(2+)(in) = Zn(2+)(out). It catalyses the reaction Cu(2+)(in) = Cu(2+)(out). Functionally, zinc importer that regulates cytosolic zinc concentrations either via zinc influx from the extracellular compartment or efflux from intracellular organelles such as Golgi apparatus. May transport copper ions as well. The transport mechanism remains to be elucidated. The chain is Zinc transporter ZIP11 (SLC39A11) from Homo sapiens (Human).